Consider the following 527-residue polypeptide: Gustatory receptor for bitter taste 66a (527 aa).

Over 1–46 the chain is Cytoplasmic; sequence MAQAEDAVQPLLQQFQQLFFISKIAGILPQDLEKFRSRNLLEKSRN. The chain crosses the membrane as a helical span at residues 47-67; sequence GMIYMLSTLILYVVLYNILIY. Topologically, residues 68–80 are extracellular; the sequence is SFGEEDRSLKASQ. The chain crosses the membrane as a helical span at residues 81 to 101; sequence STLTFVIGLFLTYIGLIMMVS. Residues 102–144 lie on the Cytoplasmic side of the membrane; the sequence is DQLTALRNQGRIGELYERIRLVDERLYKEGCVMDNSTIGRRIR. Residues 145 to 165 form a helical membrane-spanning segment; it reads IMLIMTVIFELSILVSTYVKL. Topologically, residues 166–174 are extracellular; it reads VDYSQWMSL. Residues 175–195 form a helical membrane-spanning segment; it reads LWIVSAIPTFINTLDKIWFAV. Topologically, residues 196–345 are cytoplasmic; sequence SLYALKERFE…KALNELWSYP (150 aa). Residues 346 to 366 form a helical membrane-spanning segment; that stretch reads ILSLMAYGFLIFTAQLYFLYC. Over 367–382 the chain is Extracellular; sequence ATQYQSIPSLFRSAKN. A helical transmembrane segment spans residues 383-403; the sequence is PFITVIVLSYTSGKCVYLIYL. Residues 404 to 460 lie on the Cytoplasmic side of the membrane; that stretch reads SWKTSQASKRTGISLHKCGVVADDNLLYEIVNHLSLKLLNHSVDFSACGFFTLDMET. A helical transmembrane segment spans residues 461–481; that stretch reads LYGVSGGITSYLIILIQFNLA. Residues 482-527 are Extracellular-facing; sequence AQQAKEAIQTFNSLNDTAGLVGAATDMDNISSTLRDFVTTTMTPAV. Asparagine 496 and asparagine 510 each carry an N-linked (GlcNAc...) asparagine glycan.

Belongs to the insect chemoreceptor superfamily. Gustatory receptor (GR) family. Gr66a subfamily. As to expression, taste hairs in labial palps, labral and cibarial sense organs and forelegs. In larvae, is expressed in neurons of the terminal external chemosensory organ, as well as in the dorsal, ventral, and posterior pharyngeal sense organs.

The protein resides in the cell membrane. Gustatory receptor required for response to the bitter in taste neurons. Gr66a cells respond to bitter compounds such as caffeine, theophylline, threonine or valine. Flies avoid bitter substances, suggesting that Gr66a neuron activity is sufficient to mediate avoidance behavior. Required for sensing and avoiding N,N-Diethyl-meta-toluamide (DEET), the most widely used insect repellent worldwide, as well as to L-canavanine, a plant-derived insecticide. Gr66a neurons are also involved in the sex-specific perception of molecules inducing male avoidance behavior, probably through sensing 7-tricosene (7-T), a male cuticular pheromone and leading to inhibition of male-male courtship. Finally, also plays a role in oviposition behavior, in which females evaluate their environment and choose to lay eggs on substrates they may find aversive in other contexts. The chain is Gustatory receptor for bitter taste 66a (Gr66a) from Drosophila melanogaster (Fruit fly).